We begin with the raw amino-acid sequence, 401 residues long: uncharacterized protein (401 aa).

The next 10 helical transmembrane spans lie at 20 to 40 (FFGE…MVLY), 49 to 69 (IMMP…LTLA), 83 to 100 (ILTA…FVFA), 104 to 121 (YVFA…SLYI), 140 to 160 (VFAV…LVGM), 167 to 187 (PVWI…IAAL), 207 to 227 (FTIY…SMLY), 248 to 268 (MLTI…VPLV), 289 to 309 (LAAA…TAAV), and 357 to 377 (GLIL…VCLL).

Belongs to the major facilitator superfamily.

The protein resides in the cell membrane. This is an uncharacterized protein from Bacillus subtilis (strain 168).